Reading from the N-terminus, the 602-residue chain is Aspartate--tRNA(Asp/Asn) ligase (602 aa).

Glu187 contacts L-aspartate. Positions 211–214 (QQFK) are aspartate. 2 residues coordinate L-aspartate: Arg233 and His461. ATP is bound at residue 233-235 (RDE). Residue Glu495 coordinates ATP. Arg502 lines the L-aspartate pocket. 547–550 (GLDR) serves as a coordination point for ATP.

Belongs to the class-II aminoacyl-tRNA synthetase family. Type 1 subfamily. As to quaternary structure, homodimer.

The protein localises to the cytoplasm. It catalyses the reaction tRNA(Asx) + L-aspartate + ATP = L-aspartyl-tRNA(Asx) + AMP + diphosphate. In terms of biological role, aspartyl-tRNA synthetase with relaxed tRNA specificity since it is able to aspartylate not only its cognate tRNA(Asp) but also tRNA(Asn). Reaction proceeds in two steps: L-aspartate is first activated by ATP to form Asp-AMP and then transferred to the acceptor end of tRNA(Asp/Asn). The protein is Aspartate--tRNA(Asp/Asn) ligase of Chlorobium phaeovibrioides (strain DSM 265 / 1930) (Prosthecochloris vibrioformis (strain DSM 265)).